A 194-amino-acid polypeptide reads, in one-letter code: Histone H1.0-A (194 aa).

Disordered regions lie at residues 1 to 29 (MTEN…YSDM) and 96 to 194 (ADEV…GRKK). One can recognise an H15 domain in the interval 22–95 (DHPKYSDMIL…GASGSFRLAK (74 aa)). Composition is skewed to basic residues over residues 102–164 (PAKK…KTVR) and 172–194 (KAKK…GRKK).

Belongs to the histone H1/H5 family.

Its subcellular location is the nucleus. The protein resides in the chromosome. Its function is as follows. Histones H1 are necessary for the condensation of nucleosome chains into higher-order structures. The histones H1.0 are found in cells that are in terminal stages of differentiation or that have low rates of cell division. This Xenopus laevis (African clawed frog) protein is Histone H1.0-A (h1-0-a).